The following is a 112-amino-acid chain: Large ribosomal subunit protein uL22 (112 aa).

Belongs to the universal ribosomal protein uL22 family. Part of the 50S ribosomal subunit.

This protein binds specifically to 23S rRNA; its binding is stimulated by other ribosomal proteins, e.g. L4, L17, and L20. It is important during the early stages of 50S assembly. It makes multiple contacts with different domains of the 23S rRNA in the assembled 50S subunit and ribosome. In terms of biological role, the globular domain of the protein is located near the polypeptide exit tunnel on the outside of the subunit, while an extended beta-hairpin is found that lines the wall of the exit tunnel in the center of the 70S ribosome. The polypeptide is Large ribosomal subunit protein uL22 (Finegoldia magna (strain ATCC 29328 / DSM 20472 / WAL 2508) (Peptostreptococcus magnus)).